A 160-amino-acid chain; its full sequence is SsrA-binding protein (160 aa).

The interval 131–160 (KKEYDKRHTERERDSDRELQRAVRTKGKED) is disordered.

The protein belongs to the SmpB family.

It is found in the cytoplasm. Required for rescue of stalled ribosomes mediated by trans-translation. Binds to transfer-messenger RNA (tmRNA), required for stable association of tmRNA with ribosomes. tmRNA and SmpB together mimic tRNA shape, replacing the anticodon stem-loop with SmpB. tmRNA is encoded by the ssrA gene; the 2 termini fold to resemble tRNA(Ala) and it encodes a 'tag peptide', a short internal open reading frame. During trans-translation Ala-aminoacylated tmRNA acts like a tRNA, entering the A-site of stalled ribosomes, displacing the stalled mRNA. The ribosome then switches to translate the ORF on the tmRNA; the nascent peptide is terminated with the 'tag peptide' encoded by the tmRNA and targeted for degradation. The ribosome is freed to recommence translation, which seems to be the essential function of trans-translation. The chain is SsrA-binding protein from Pseudomonas fluorescens (strain ATCC BAA-477 / NRRL B-23932 / Pf-5).